The chain runs to 59 residues: Large ribosomal subunit protein uL30 (59 aa).

It belongs to the universal ribosomal protein uL30 family. In terms of assembly, part of the 50S ribosomal subunit.

The protein is Large ribosomal subunit protein uL30 of Psychrobacter sp. (strain PRwf-1).